Here is a 424-residue protein sequence, read N- to C-terminus: GTPase Obg (424 aa).

The Obg domain maps to 1 to 160; sequence MFDRVEIRIK…YELILELKLI (160 aa). Positions 161-328 constitute an OBG-type G domain; it reads ADVAIIGYPN…LLDKVAEKLA (168 aa). GTP-binding positions include 167-174, 192-196, 213-216, 280-283, and 309-311; these read GYPNVGKS, FTTLS, EVPG, NKID, and SAL. Positions 174 and 194 each coordinate Mg(2+). Residues 349 to 424 enclose the OCT domain; that stretch reads PAPKGKMGFH…IITGRLEWYL (76 aa).

This sequence belongs to the TRAFAC class OBG-HflX-like GTPase superfamily. OBG GTPase family. As to quaternary structure, monomer. It depends on Mg(2+) as a cofactor.

It localises to the cytoplasm. An essential GTPase which binds GTP, GDP and possibly (p)ppGpp with moderate affinity, with high nucleotide exchange rates and a fairly low GTP hydrolysis rate. Plays a role in control of the cell cycle, stress response, ribosome biogenesis and in those bacteria that undergo differentiation, in morphogenesis control. The polypeptide is GTPase Obg (Dehalococcoides mccartyi (strain ATCC BAA-2266 / KCTC 15142 / 195) (Dehalococcoides ethenogenes (strain 195))).